We begin with the raw amino-acid sequence, 251 residues long: 5'-nucleotidase SurE (251 aa).

4 residues coordinate a divalent metal cation: aspartate 8, aspartate 9, serine 39, and asparagine 95.

The protein belongs to the SurE nucleotidase family. The cofactor is a divalent metal cation.

It is found in the cytoplasm. It carries out the reaction a ribonucleoside 5'-phosphate + H2O = a ribonucleoside + phosphate. Functionally, nucleotidase that shows phosphatase activity on nucleoside 5'-monophosphates. In Ralstonia nicotianae (strain ATCC BAA-1114 / GMI1000) (Ralstonia solanacearum), this protein is 5'-nucleotidase SurE.